The chain runs to 24 residues: Coenzyme PQQ synthesis protein A (24 aa).

Residues 16 to 20 constitute a cross-link (pyrroloquinoline quinone (Glu-Tyr)); the sequence is EVTMY.

The protein belongs to the PqqA family.

It functions in the pathway cofactor biosynthesis; pyrroloquinoline quinone biosynthesis. Its function is as follows. Required for coenzyme pyrroloquinoline quinone (PQQ) biosynthesis. PQQ is probably formed by cross-linking a specific glutamate to a specific tyrosine residue and excising these residues from the peptide. The polypeptide is Coenzyme PQQ synthesis protein A (Methylococcus capsulatus (strain ATCC 33009 / NCIMB 11132 / Bath)).